A 210-amino-acid chain; its full sequence is dTTP/UTP pyrophosphatase (210 aa).

The active-site Proton acceptor is aspartate 80.

This sequence belongs to the Maf family. YhdE subfamily. A divalent metal cation is required as a cofactor.

The protein resides in the cytoplasm. The enzyme catalyses dTTP + H2O = dTMP + diphosphate + H(+). The catalysed reaction is UTP + H2O = UMP + diphosphate + H(+). Its function is as follows. Nucleoside triphosphate pyrophosphatase that hydrolyzes dTTP and UTP. May have a dual role in cell division arrest and in preventing the incorporation of modified nucleotides into cellular nucleic acids. This Nitratidesulfovibrio vulgaris (strain ATCC 29579 / DSM 644 / CCUG 34227 / NCIMB 8303 / VKM B-1760 / Hildenborough) (Desulfovibrio vulgaris) protein is dTTP/UTP pyrophosphatase.